The sequence spans 164 residues: Protein phosphatase 1 regulatory subunit 14C (164 aa).

Residues 1–19 (MSVVTGGGEAAGGGGGGGA) are compositionally biased toward gly residues. The tract at residues 1–70 (MSVVTGGGEA…QQQRRHQQGK (70 aa)) is disordered. N-acetylserine is present on Ser-2. Ser-25 is subject to Phosphoserine. Omega-N-methylarginine is present on Arg-27. The residue at position 33 (Ser-33) is a Phosphoserine. The span at 50-62 (VTTVAAAGQVQQQ) shows a compositional bias: low complexity. At Thr-72 the chain carries Phosphothreonine; by ILK1.

It belongs to the PP1 inhibitor family. In terms of processing, the main inhibitory site appears to be Thr-72. Has over 600-fold higher inhibitory activity when phosphorylated, creating a molecular switch for regulating the phosphorylation status of PPP1CA substrates and smooth muscle contraction. As to expression, detected in heart, muscle, spinal cord, hippocampus, hypothalamus, thalamus, midbrain, brain stem, cerebellum, brain cortex and olfactory bulb.

It localises to the endomembrane system. In terms of biological role, inhibitor of the PP1 regulatory subunit PPP1CA. In Mus musculus (Mouse), this protein is Protein phosphatase 1 regulatory subunit 14C (Ppp1r14c).